We begin with the raw amino-acid sequence, 689 residues long: Beta-adrenergic receptor kinase 1 (689 aa).

The segment at 1–190 (MADLEAVLAD…ELNIHLTMND (190 aa)) is N-terminal. Positions 54–175 (TFEKIFSQKL…IESDKFTRFC (122 aa)) constitute an RGS domain. Residues 191 to 453 (FSVHRIIGRG…AQEVKESPFF (263 aa)) form the Protein kinase domain. ATP is bound by residues 197–205 (IGRGGFGEV) and K220. The Proton acceptor role is filled by D317. Residues 454-521 (RSLDWQMVFL…TISERWQQEV (68 aa)) form the AGC-kinase C-terminal domain. Residues 558–652 (DCIMHGYMSK…WKKELRDAYR (95 aa)) enclose the PH domain. S670 carries the phosphoserine modification.

Belongs to the protein kinase superfamily. AGC Ser/Thr protein kinase family. GPRK subfamily. In terms of assembly, interacts with the heterodimer formed by GNB1 and GNG2. Interacts with GIT1. Interacts with, and phosphorylates chemokine-stimulated CCR5. Interacts with ARRB1. Interacts with LPAR1 and LPAR2. Interacts with RALA in response to LPAR1 activation. ADRBK1 and RALA mutually inhibit each other's binding to LPAR1. Interacts with ADRB2.

The protein resides in the cytoplasm. Its subcellular location is the cell membrane. It localises to the postsynapse. The protein localises to the presynapse. It carries out the reaction [beta-adrenergic receptor] + ATP = [beta-adrenergic receptor]-phosphate + ADP + H(+). In contrast to other AGC family kinases, the catalytic activity is solely regulated by the binding of substrates and ligands, not by phosphorylation of the kinase domain. Functionally, specifically phosphorylates the agonist-occupied form of the beta-adrenergic and closely related receptors, probably inducing a desensitization of them. Key regulator of LPAR1 signaling. Competes with RALA for binding to LPAR1 thus affecting the signaling properties of the receptor. Desensitizes LPAR1 and LPAR2 in a phosphorylation-independent manner. Positively regulates ciliary smoothened (SMO)-dependent Hedgehog (Hh) signaling pathway by facilitating the trafficking of SMO into the cilium and the stimulation of SMO activity. Inhibits relaxation of airway smooth muscle in response to blue light. The sequence is that of Beta-adrenergic receptor kinase 1 from Mesocricetus auratus (Golden hamster).